A 360-amino-acid polypeptide reads, in one-letter code: Alpha-methylacyl-CoA racemase (360 aa).

Residues R38, 59 to 62 (ADLK), 83 to 85 (GYR), R91, and 125 to 130 (GHDINY) each bind substrate. The Proton acceptor role is filled by H126. The active-site Proton donor is D156.

It belongs to the CoA-transferase III family. In terms of assembly, homodimer.

It carries out the reaction a (2S)-2-methylacyl-CoA = a (2R)-2-methylacyl-CoA. It catalyses the reaction (2S)-2-methyltetradecanoyl-CoA = (2R)-2-methyltetradecanoyl-CoA. The enzyme catalyses (2R)-pristanoyl-CoA = (2S)-pristanoyl-CoA. The catalysed reaction is (25S)-3-oxocholest-4-en-26-oyl-CoA = (25R)-3-oxocholest-4-en-26-oyl-CoA. It carries out the reaction (2S)-ibuprofenoyl-CoA = (2R)-ibuprofenoyl-CoA. Inactivated by N,N-dialkylcarbamoyl-CoA substrate-product analogs. Functionally, catalyzes the epimerization of (2R)- and (2S)-methylacyl-coenzyme A (CoA) thioesters. Accepts as substrates a wide range of alpha-methylacyl-CoAs, including (2R)-2-methylmyristoyl-CoA and (2S)-2-methylmyristoyl-CoA, (2R)-pristanoyl-CoA and (2S)-pristanoyl-CoA, and the cholesterol esters (25R)-3-oxo-cholest-4-en-26-oyl-CoA and (25S)-3-oxo-cholest-4-en-26-oyl-CoA. Can also catalyze the interconversion of the non-physiologic substrates (2R)-ibuprofenoyl-CoA and (2S)-ibuprofenoyl-CoA, which are potential competitive inhibitors of the enzyme. The polypeptide is Alpha-methylacyl-CoA racemase (Mycobacterium tuberculosis (strain ATCC 25618 / H37Rv)).